The sequence spans 113 residues: UPF0122 protein MGAS10270_Spy1030 (113 aa).

It belongs to the UPF0122 family.

Its function is as follows. Might take part in the signal recognition particle (SRP) pathway. This is inferred from the conservation of its genetic proximity to ftsY/ffh. May be a regulatory protein. The sequence is that of UPF0122 protein MGAS10270_Spy1030 from Streptococcus pyogenes serotype M2 (strain MGAS10270).